A 427-amino-acid polypeptide reads, in one-letter code: UDP-N-acetylglucosamine 1-carboxyvinyltransferase (427 aa).

22-23 provides a ligand contact to phosphoenolpyruvate; sequence KN. Arg99 contributes to the UDP-N-acetyl-alpha-D-glucosamine binding site. Residue Cys123 is the Proton donor of the active site. Cys123 carries the post-translational modification 2-(S-cysteinyl)pyruvic acid O-phosphothioketal. UDP-N-acetyl-alpha-D-glucosamine contacts are provided by residues 128–132, Asp313, and Ile335; that span reads RPIDL.

Belongs to the EPSP synthase family. MurA subfamily.

Its subcellular location is the cytoplasm. The enzyme catalyses phosphoenolpyruvate + UDP-N-acetyl-alpha-D-glucosamine = UDP-N-acetyl-3-O-(1-carboxyvinyl)-alpha-D-glucosamine + phosphate. It functions in the pathway cell wall biogenesis; peptidoglycan biosynthesis. Its function is as follows. Cell wall formation. Adds enolpyruvyl to UDP-N-acetylglucosamine. This chain is UDP-N-acetylglucosamine 1-carboxyvinyltransferase, found in Novosphingobium aromaticivorans (strain ATCC 700278 / DSM 12444 / CCUG 56034 / CIP 105152 / NBRC 16084 / F199).